Consider the following 1052-residue polypeptide: ATP-dependent DNA helicase MPH1 (1052 aa).

In terms of domain architecture, Helicase ATP-binding spans isoleucine 89–lysine 256. Isoleucine 102–threonine 109 contributes to the ATP binding site. The short motif at aspartate 204–histidine 207 is the DEAH box element. Residues glutamate 432–arginine 649 form the Helicase C-terminal domain. Disordered stretches follow at residues histidine 495–glutamine 550, isoleucine 798–leucine 832, serine 869–valine 898, and histidine 1002–phenylalanine 1052. A compositionally biased stretch (basic and acidic residues) spans serine 503–serine 532. A compositionally biased stretch (polar residues) spans arginine 534 to lysine 549. 2 stretches are compositionally biased toward low complexity: residues glutamine 875–valine 898 and serine 1005–serine 1028. Residues glutamine 1029–threonine 1040 are compositionally biased toward basic and acidic residues. Over residues glutamate 1043 to phenylalanine 1052 the composition is skewed to acidic residues.

This sequence belongs to the DEAD box helicase family. DEAH subfamily. FANCM sub-subfamily. In terms of assembly, interacts with the MHF histone-fold complex to form the FANCM-MHF complex.

Its subcellular location is the nucleus. The catalysed reaction is ATP + H2O = ADP + phosphate + H(+). Functionally, ATP-dependent DNA helicase involved in DNA damage repair by homologous recombination and in genome maintenance. Capable of unwinding D-loops. Plays a role in limiting crossover recombinants during mitotic DNA double-strand break (DSB) repair. Component of a FANCM-MHF complex which promotes gene conversion at blocked replication forks, probably by reversal of the stalled fork. This Candida glabrata (strain ATCC 2001 / BCRC 20586 / JCM 3761 / NBRC 0622 / NRRL Y-65 / CBS 138) (Yeast) protein is ATP-dependent DNA helicase MPH1.